The sequence spans 416 residues: UDP-N-acetylglucosamine 1-carboxyvinyltransferase (416 aa).

22-23 (KN) contributes to the phosphoenolpyruvate binding site. Residue Arg-91 coordinates UDP-N-acetyl-alpha-D-glucosamine. Catalysis depends on Cys-115, which acts as the Proton donor. The residue at position 115 (Cys-115) is a 2-(S-cysteinyl)pyruvic acid O-phosphothioketal. UDP-N-acetyl-alpha-D-glucosamine-binding positions include 120 to 124 (RPIDL), Asp-305, and Ile-327.

This sequence belongs to the EPSP synthase family. MurA subfamily.

The protein localises to the cytoplasm. The enzyme catalyses phosphoenolpyruvate + UDP-N-acetyl-alpha-D-glucosamine = UDP-N-acetyl-3-O-(1-carboxyvinyl)-alpha-D-glucosamine + phosphate. The protein operates within cell wall biogenesis; peptidoglycan biosynthesis. Cell wall formation. Adds enolpyruvyl to UDP-N-acetylglucosamine. The chain is UDP-N-acetylglucosamine 1-carboxyvinyltransferase from Buchnera aphidicola subsp. Acyrthosiphon pisum (strain Tuc7).